We begin with the raw amino-acid sequence, 1098 residues long: Gramicidin S synthase 1 (1098 aa).

Residues 538 to 612 (APRNEIEETL…QLVHYIKDSK (75 aa)) form the Carrier domain. Residue Ser573 is modified to O-(pantetheine 4'-phosphoryl)serine.

This sequence belongs to the ATP-dependent AMP-binding enzyme family. In terms of assembly, large multienzyme complex of GrsA and GrsB. Pantetheine 4'-phosphate is required as a cofactor.

It carries out the reaction L-phenylalanine + ATP + H2O = D-phenylalanine + AMP + diphosphate + H(+). It functions in the pathway antibiotic biosynthesis; gramicidin S biosynthesis. Functionally, in the first step of peptide synthesis this enzyme activates phenylalanine and racemizes it to the D-isomer. The chain is Gramicidin S synthase 1 (grsA) from Brevibacillus brevis (Bacillus brevis).